Consider the following 111-residue polypeptide: Large ribosomal subunit protein uL23 (111 aa).

It belongs to the universal ribosomal protein uL23 family. In terms of assembly, part of the 50S ribosomal subunit. Contacts protein L29, and trigger factor when it is bound to the ribosome.

Functionally, one of the early assembly proteins it binds 23S rRNA. One of the proteins that surrounds the polypeptide exit tunnel on the outside of the ribosome. Forms the main docking site for trigger factor binding to the ribosome. The chain is Large ribosomal subunit protein uL23 from Nitrosomonas eutropha (strain DSM 101675 / C91 / Nm57).